The following is a 77-amino-acid chain: AKWYPEVRHHCPNTPIILVGTKLDLRDDKDTIEKLKEKKLTPITYPQGLAMAKEIGAVKYLECSALTQRTVFDEAIR.

22-24 is a GTP binding site; sequence KLD. Lys-53 participates in a covalent cross-link: Glycyl lysine isopeptide (Lys-Gly) (interchain with G-Cter in ubiquitin). Position 65–66 (65–66) interacts with GTP; it reads AL.

The protein belongs to the small GTPase superfamily. Rho family. As to quaternary structure, interacts with NISCH. Interacts with PIP5K1A. Interacts with the GTP-bound form of RAB7A. Interacts with SRGAP2. Interacts with CYFIP1/SRA-1. Interacts with PLXNB3. Interacts with ARHGDIA; the interaction is induced by SEMA5A, mediated through PLXNB3 and inactivates and stabilizes RAC1. Interacts (GTP-bound form preferentially) with PKN2 (via the REM repeats); the interaction stimulates autophosphorylation and phosphorylation of PKN2. Interacts with the GEF proteins PREX1, RASGRF2, FARP1, FARP2, DOCK1, DOCK2 and DOCK7, which promote the exchange between GDP and GTP, and therefore activate it. Interacts with PARD6A, PARD6B and PARD6G in a GTP-dependent manner. Part of a quaternary complex containing PARD3, some PARD6 protein (PARD6A, PARD6B or PARD6G) and some atypical PKC protein (PRKCI or PRKCZ), which plays a central role in epithelial cell polarization. Found in a trimeric complex composed of DOCK1 and ELMO1, which plays a central role in phagocytosis of apoptotic cells. Interacts with RALBP1 via its effector domain. Interacts with PLXNB1. Part of a complex with MAP2K3, MAP3K3, CCM2 and DEF6. Interacts with BAIAP2, BAIAP2L1 and DEF6. Interacts with Y.pseudotuberculosis YPKA and PLCB2. Interacts with NOXA1. Interacts with ARHGEF2. Interacts with TBC1D2. Interacts with UNKL. Interacts with USP6. Interacts with SPATA13. Interacts with ARHGEF16; mediates activation of RAC1 by EPHA2. Interacts with ITGB4. Interacts with S100A8 and calprotectin (S100A8/9). Interacts with PACSIN2. Interacts (when active) with PPP5C (via TPR repeats); activates PPP5C phosphatase activity and translocates PPP5C to the cell membrane. Interacts with RAPH1 (via Ras associating and PH domains). Interacts with MTSS2 (via IMD domain); this interaction may be important to potentiate PDGF-induced RAC1 activation. Interacts with PAK2. Interacts (GTP-bound form) with SH3RF1 and SH3RF3. Found in a complex with SH3RF1, MAPK8IP1/JIP1, MAP3K11/MLK3, MAP2K7/MKK7 and MAPK8/JNK1. Interacts (both active GTP- or inactive GDP-bound forms) with SH3RF2. Interacts (GTP-bound form preferentially) with CYRIB. Interacts with DOCK4 (via DOCKER domain); functions as a guanine nucleotide exchange factor (GEF) for RAC1. Interacts with GARRE1. Interacts with RAP1GDS1. May interact with ARHGAP36. Interacts with DSG3; the interaction is required for DSG3 translocation to cell-cell junctions, organization of cortical F-actin bundles and actin anchoring at cell-cell junctions. Component of the phagocyte NADPH oxidase complex composed of an obligatory core heterodimer formed by the membrane proteins CYBA and CYBB and the cytosolic regulatory subunits NCF1/p47-phox, NCF2/p67-phox, NCF4/p40-phox and the small GTPase RAC1 or RAC2. Interacts with NCF2. The N-terminus is blocked. Post-translationally, GTP-bound active form is ubiquitinated by HACE1, leading to its degradation by the proteasome.

The protein localises to the cytoplasm. It is found in the membrane. The protein resides in the melanosome. It localises to the cell projection. Its subcellular location is the lamellipodium. The protein localises to the dendrite. It is found in the synapse. The protein resides in the nucleus. The catalysed reaction is GTP + H2O = GDP + phosphate + H(+). Its activity is regulated as follows. Regulated by guanine nucleotide exchange factors (GEFs) which promote the exchange of bound GDP for free GTP, GTPase activating proteins (GAPs) which increase the GTP hydrolysis activity, and GDP dissociation inhibitors which inhibit the dissociation of the nucleotide from the GTPase. GTP hydrolysis is stimulated by ARHGAP30. Plasma membrane-associated small GTPase which cycles between active GTP-bound and inactive GDP-bound states. In its active state, binds to a variety of effector proteins to regulate cellular responses such as secretory processes, phagocytosis of apoptotic cells, epithelial cell polarization, neurons adhesion, migration and differentiation, and growth-factor induced formation of membrane ruffles. Rac1 p21/rho GDI heterodimer is the active component of the cytosolic factor sigma 1, which is involved in stimulation of the NADPH oxidase activity in macrophages. Essential for the SPATA13-mediated regulation of cell migration and adhesion assembly and disassembly. Stimulates PKN2 kinase activity. In concert with RAB7A, plays a role in regulating the formation of RBs (ruffled borders) in osteoclasts. In podocytes, promotes nuclear shuttling of NR3C2; this modulation is required for a proper kidney functioning. Required for atypical chemokine receptor ACKR2-induced LIMK1-PAK1-dependent phosphorylation of cofilin (CFL1) and for up-regulation of ACKR2 from endosomal compartment to cell membrane, increasing its efficiency in chemokine uptake and degradation. In neurons, is involved in dendritic spine formation and synaptic plasticity. In hippocampal neurons, involved in spine morphogenesis and synapse formation, through local activation at synapses by guanine nucleotide exchange factors (GEFs), such as ARHGEF6/ARHGEF7/PIX. In synapses, seems to mediate the regulation of F-actin cluster formation performed by SHANK3. In neurons, plays a crucial role in regulating GABA(A) receptor synaptic stability and hence GABAergic inhibitory synaptic transmission through its role in PAK1 activation and eventually F-actin stabilization. Required for DSG3 translocation to cell-cell junctions, DSG3-mediated organization of cortical F-actin bundles and anchoring of actin at cell junctions; via interaction with DSG3. Subunit of the phagocyte NADPH oxidase complex that mediates the transfer of electrons from cytosolic NADPH to O2 to produce the superoxide anion (O2(-)). This chain is Ras-related C3 botulinum toxin substrate 1, found in Cavia porcellus (Guinea pig).